We begin with the raw amino-acid sequence, 251 residues long: 5'-nucleotidase SurE (251 aa).

A divalent metal cation contacts are provided by D8, D9, S40, and N95.

It belongs to the SurE nucleotidase family. Requires a divalent metal cation as cofactor.

It localises to the cytoplasm. The enzyme catalyses a ribonucleoside 5'-phosphate + H2O = a ribonucleoside + phosphate. In terms of biological role, nucleotidase that shows phosphatase activity on nucleoside 5'-monophosphates. The polypeptide is 5'-nucleotidase SurE (Maridesulfovibrio salexigens (strain ATCC 14822 / DSM 2638 / NCIMB 8403 / VKM B-1763) (Desulfovibrio salexigens)).